The chain runs to 725 residues: MKVLTELQKQIFTIVKKENGKPIPPGIVVRMMENSPNFPGKHLIYRAIDDLLDWAILRKAGGVTNQLLVNYEPAEPLLDKKLQGILTLGNKNSGFIRSLDDDKTVYYVHYSNLTGALDGDLVEFCKLDKPQFGDKFDAAVITILKRARILYAGNFLVDQNEFALEYKIVADNPRFYLTMIVNPDSIPNNLASNTKIAFQIDEYDPDNNLCKVSVQQVLGNNDDPLINIKAIMLDNSIVFETNDVVEQHANKLSFDTEEQHKAYRQDLTDLAFVTVDPTTSKDLDDAIYVKTIPTGFVLYVAIADVAHYVNRNSEIDIEAKHKTSSIYLPGHYVVPMLPEQLSNQLCSLNPAQKRYVVVCEISFDNQGRIKTNKLYPATIISKNRFSYDQVNKWLNNKSELNCDETVINSLKAAFTLSDLIQAQRQKRGTIDLSHKETEIVVDEHYFPIKINFLVHDKAETMIENLMVVANETVAWVLTNNKIALPYRVHPRPSKKKLQSLIETVGELNITKPQFNLDTVTSSQIASWLNENKDNPSYEIFVILLLRTLGKAFYSVNPLMHFSIGSNHYTHFTSPIRRYIDLTIHRLLWMHLFTPDQFTDNERDQLKQELEKIADTVNDTEIKIINCERNANDYLTTLLLSKQIGKTFSGFISAITSFGIFMRMDENNFDGLIKITTIPDDFFIFEKEKMVLKGRKTNKVYKIGDRLEAKLSEIDFIQKRAILTLI.

An RNB domain is found at 264 to 592 (RQDLTDLAFV…IHRLLWMHLF (329 aa)). The region spanning 644-725 (GKTFSGFISA…IQKRAILTLI (82 aa)) is the S1 motif domain.

This sequence belongs to the RNR ribonuclease family. RNase R subfamily.

It is found in the cytoplasm. The enzyme catalyses Exonucleolytic cleavage in the 3'- to 5'-direction to yield nucleoside 5'-phosphates.. In terms of biological role, 3'-5' exoribonuclease that releases 5'-nucleoside monophosphates and is involved in maturation of structured RNAs. The chain is Ribonuclease R from Mycoplasma genitalium (strain ATCC 33530 / DSM 19775 / NCTC 10195 / G37) (Mycoplasmoides genitalium).